Consider the following 1121-residue polypeptide: Anillin (1121 aa).

M1 is modified (N-acetylmethionine). Basic and acidic residues predominate over residues 1-25 (MDPFTEKLLERTRARRENLQRKMAE). The segment at 1 to 45 (MDPFTEKLLERTRARRENLQRKMAERPTAVARSAPHAKRGREPLS) is required for ubiquitination. 3 disordered regions span residues 1–113 (MDPF…AAIS), 125–196 (ADRG…PVGR), and 212–402 (DDVS…TKAI). Residues 1 to 154 (MDPFTEKLLE…MQRLAEQRRH (154 aa)) are interaction with CD2AP. The tract at residues 1–228 (MDPFTEKLLE…AKQNSVQEQP (228 aa)) is nuclear localization. A phosphoserine mark is found at S73 and S96. A compositionally biased stretch (pro residues) spans 96–109 (SPMPAPRQAKPPAP). Residues 130 to 143 (NSGSEASATSSVKT) are compositionally biased toward polar residues. The segment covering 147-157 (RLAEQRRHWDS) has biased composition (basic and acidic residues). S180 bears the Phosphoserine mark. Position 192 is a phosphothreonine (T192). The segment covering 216–228 (HSSAKQNSVQEQP) has biased composition (polar residues). A phosphoserine mark is found at S223, S250, and S259. The segment at 229-671 (GTACLSKSSS…RDLLYSIDAY (443 aa)) is interaction with F-actin. A compositionally biased stretch (low complexity) spans 234 to 250 (SKSSSASGASASINSSS). Positions 282–298 (SASVSSSVKASSPVTAA) are enriched in low complexity. Residues 303 to 314 (ENREAQNPELLH) are compositionally biased toward basic and acidic residues. T316 is subject to Phosphothreonine. Phosphoserine occurs at positions 318 and 334. Residue T359 is modified to Phosphothreonine. Position 366 is an N6-acetyllysine (K366). Basic and acidic residues predominate over residues 368 to 384 (FLERFGERCQEHSKESP). Over residues 391-401 (KTPNITPNTKA) the composition is skewed to polar residues. 2 positions are modified to phosphothreonine: T392 and T396. 2 positions are modified to phosphoserine: S414 and S444. The segment at 490-511 (NEPAVKLSSTEPAGSTESEMTK) is disordered. Polar residues predominate over residues 496–511 (LSSTEPAGSTESEMTK). S513, S548, and S556 each carry phosphoserine. Positions 564-599 (FSDVLEEGELDVEKSQEEMDQVGAENSEEQEDALNI) form a coiled coil. Over residues 623 to 635 (SPPSELRDSNLSA) the composition is skewed to polar residues. The disordered stretch occupies residues 623-656 (SPPSELRDSNLSAASPKPGKFQRTRVPRAESADS). Phosphoserine occurs at positions 637, 653, 656, and 659. Phosphotyrosine is present on Y666. A phosphoserine mark is found at S673, S683, S787, and S924. The interval 725–1121 (QQTVIYQASQ…DACYKPVGKP (397 aa)) is localization to the cleavage furrow. One can recognise a PH domain in the interval 980-1104 (AVEEKGFLTI…WMQKLNQVIV (125 aa)).

In terms of assembly, interacts with F-actin. Interacts with CD2AP. May interact with RHOA. Interacts with FZR1/CDH1 during mitotic exit. Post-translationally, phosphorylated during mitosis. Ubiquitinated, and this requires FZR1/CDH1.

The protein localises to the nucleus. The protein resides in the cytoplasm. It is found in the cytoskeleton. Its subcellular location is the cell cortex. It localises to the cell projection. The protein localises to the bleb. Functionally, required for cytokinesis. Essential for the structural integrity of the cleavage furrow and for completion of cleavage furrow ingression. Plays a role in bleb assembly during metaphase and anaphase of mitosis. May play a significant role in podocyte cell migration. The sequence is that of Anillin (Anln) from Mus musculus (Mouse).